Reading from the N-terminus, the 742-residue chain is Hapless 2 (742 aa).

Residues methionine 1–cysteine 19 form the signal peptide. Residues glutamate 20–glutamate 540 are Extracellular-facing. 7 cysteine pairs are disulfide-bonded: cysteine 30/cysteine 40, cysteine 118/cysteine 147, cysteine 129/cysteine 182, cysteine 148/cysteine 312, cysteine 150/cysteine 168, cysteine 295/cysteine 319, and cysteine 431/cysteine 470. The segment at leucine 152–threonine 179 is important for membrane fusion. A helical transmembrane segment spans residues alanine 541–leucine 561. The Cytoplasmic segment spans residues alanine 562–glutamate 742.

The protein belongs to the HAP2/GCS1 family.

The protein resides in the cell membrane. It localises to the cell junction. In terms of biological role, during fertilization, required for the formation of intercellular membrane pores and subsequent exchange of gametic pronuclei between cells. Probably initiates the formation of intercellular membrane pores by inserting part of its extracellular domain into the cell membrane of the adjoining cell in the mating pair. Mating requires the presence of HAP2 on at least one of the two cells. Mating efficiency is high when HAP2 is present on both cells, and is strongly reduced when HAP2 is present on only one of the two cells. This Tetrahymena thermophila protein is Hapless 2.